The primary structure comprises 1328 residues: MNRTSPDSEQPPASEPVWERPWSVEEIRRSSQNWSLAADAGLLQFLQEFSQQTISRTHEIKKQVDGLIQETKATHCRLHNVFNDFLMLSNTQFIENRVYDEEVEDQALKTEAEKAEQEKTREQKEIDLIPKVQEAVNYGLQVLDSAFEQLDIKAGNSDSEEEDANERVELILEPKDLYIDRPLPYLIGSKLFMEQEDVGLGELSSEEGSVGSDRGSIVDSEDEKEEEESDDFASHSDNEQNQHITQMSDEEEDDDADLFADSEKEGDDIEDIEESAKSKRPTSFADELAARIKGDVSNQRKEGHTDGKPQRTVKEKKERRTPADDEEDILFPPPTLTDEDFSPFGSRGGLFSDRQGLFDDDDESDLFKEAPRGQPAQGPVSEESPPSPKPGKKIPAGAVSVFLGYTDVSGSTSAPSLKEFQKHEQSTPGKSPHLPAPTGLFDDDDNDSDEDDNFFMPSSSKPSKTDKVKPTTIIFDDDEGDLFKEKTTALPAASVSQTDENKARTDKTITLPSSKNPKLVSETKTQKGLFSDEEDSEDLFSSQSSSKTKSASVLSSQPPASVSLFGDEDEEDNLFGSAAAKKQTSSLPPQSQEKAKPSEQPPKKASALFSSDEEDQWSVADSQTKLASERKSKGERWDAGTNQGQEAKAVKKTNLFEEEDDDGVDLFAIAKDSQKKTQRTSLLFEDDTDSGSSLFSLPPTSVPPAATKKESIPKVPLLFSDEEDSEVPSGVKPVDLKAENAAASPEVGSADVANVAQKEGLLPTSDQEAGGPSDIFSSSSPLDKGAKGRTKTVLSLFDEDEDKVEDDSNTCAPQGGLEKGVKTDRRPKSTGVFQDEELLFSHKLQKDNDPDVDLFAGTKKTRLSMPSGGSLFGDDDDDDLFSTAKTQPAQPVVPEKKGTLRKDHKPPELTEGSKEKSTWKAETAQDSSGLTPFKSREPSSRIGKIQANLAINPATLLPSVAPQIPGAKPASCELAFPSSEPARSHIREAVPTLPGSEEAGVSFDLPAQADTLHSANKGRVKVRGKRRPQTRAARRLAAQESSEAEDVTIDRGPVTQLSSSPVLPNGHQPLLQPRMASGETSSEKAMAVPWEGGPVLSAVDRSFFVKSLPQTGNEAHLFDSGDIFPKSTGSQSMEGASVKAGETPAHSSAGRKEKSLVFPDLSEASGVDDLFQSAKPRPTKKRNPFPLLEDEEDLFADQKGKKNQWKSDSHQDVVSKTQDIFEDDIFATEAIKKPFPKKREKERTLEPNLFDDNIDIFADLTVKPKEKPKKKVTAKSMFDDDTDDIFSSGLQAKASKPKSQSAEAVSELRSENKVSNIFDDPLNAFGSQ.

The interval 1–219 is sufficient for interaction with WASHC3, WASHC4 and WASHC5; required for interaction with WASHC1; the sequence is MNRTSPDSEQ…VGSDRGSIVD (219 aa). 5 positions are modified to phosphoserine: Ser-157, Ser-159, Ser-204, Ser-205, and Ser-209. Positions 201–213 are enriched in low complexity; it reads GELSSEEGSVGSD. Disordered regions lie at residues 201-655 and 675-830; these read GELS…KTNL and KKTQ…PKST. 2 stretches are compositionally biased toward acidic residues: residues 219-231 and 248-273; these read DSEDEKEEEESDD and SDEEEDDDADLFADSEKEGDDIEDIE. Ser-283 carries the post-translational modification Phosphoserine. Basic and acidic residues predominate over residues 288–323; sequence LAARIKGDVSNQRKEGHTDGKPQRTVKEKKERRTPA. The residue at position 321 (Thr-321) is a Phosphothreonine. Residues 346–592 are sufficient for interaction with CCDC93; sequence SRGGLFSDRQ…QTSSLPPQSQ (247 aa). The tract at residues 347-1328 is interaction with VPS35; it reads RGGLFSDRQG…DDPLNAFGSQ (982 aa). The LFa 1 signature appears at 357–367; it reads LFDDDDESDLF. Residues Ser-384 and Ser-387 each carry the phosphoserine modification. 2 consecutive short sequence motifs (LFa) follow at residues 440–455 and 474–483; these read LFDDDDNDSDEDDNFF and IFDDDEGDLF. Positions 441-453 are enriched in acidic residues; sequence FDDDDNDSDEDDN. Residues 508-528 are compositionally biased toward polar residues; the sequence is TITLPSSKNPKLVSETKTQKG. 2 consecutive short sequence motifs (LFa) follow at residues 529-540 and 564-575; these read LFSDEEDSEDLF and LFGDEDEEDNLF. Residues Ser-531 and Ser-536 each carry the phosphoserine modification. Positions 539–556 are enriched in low complexity; sequence LFSSQSSSKTKSASVLSS. The span at 582 to 592 shows a compositional bias: polar residues; the sequence is KQTSSLPPQSQ. Phosphoserine occurs at positions 610 and 611. Basic and acidic residues predominate over residues 627 to 638; that stretch reads ASERKSKGERWD. 2 consecutive short sequence motifs (LFa) follow at residues 655–667 and 683–695; these read LFEEEDDDGVDLF and LFEDDTDSGSSLF. Polar residues predominate over residues 690 to 699; that stretch reads SGSSLFSLPP. Ser-720, Ser-744, Ser-749, Ser-780, and Ser-795 each carry phosphoserine. Acidic residues predominate over residues 797 to 808; sequence FDEDEDKVEDDS. 2 short sequence motifs (LFa) span residues 832–840 and 849–855; these read VFQDEELLF and DPDVDLF. Disordered stretches follow at residues 863-940 and 991-1088; these read LSMP…EPSS and PTLP…AMAV. 2 positions are modified to phosphoserine: Ser-867 and Ser-870. The LFa 10 motif lies at 871–881; sequence LFGDDDDDDLF. Positions 894-919 are enriched in basic and acidic residues; that stretch reads PEKKGTLRKDHKPPELTEGSKEKSTW. Residues 925–1328 are interaction with phospholipids; that stretch reads QDSSGLTPFK…DDPLNAFGSQ (404 aa). The span at 1016–1034 shows a compositional bias: basic residues; that stretch reads NKGRVKVRGKRRPQTRAAR. The segment at 1017–1035 is required for interaction with F-actin-capping protein subunit alpha (CAPZA1 or CAPZA2 or CAPZA3); it reads KGRVKVRGKRRPQTRAARR. Phosphoserine is present on residues Ser-1042, Ser-1060, Ser-1077, and Ser-1102. The tract at residues 1115–1210 is disordered; that stretch reads AHLFDSGDIF…KKNQWKSDSH (96 aa). 3 consecutive short sequence motifs (LFa) follow at residues 1117–1124, 1157–1171, and 1187–1195; these read LFDSGDIF, VFPDLSEASGVDDLF, and LLEDEEDLF. Residues Ser-1162 and Ser-1165 each carry the phosphoserine modification. Residues 1196–1210 are compositionally biased toward basic and acidic residues; sequence ADQKGKKNQWKSDSH. 3 consecutive short sequence motifs (LFa) follow at residues 1220-1226, 1249-1257, and 1277-1286; these read IFEDDIF, LFDDNIDIF, and MFDDDTDDIF. The disordered stretch occupies residues 1289–1310; the sequence is GLQAKASKPKSQSAEAVSELRS. Positions 1317 to 1325 match the LFa 17 motif; the sequence is IFDDPLNAF. Ser-1327 carries the phosphoserine modification.

This sequence belongs to the FAM21 family. As to quaternary structure, component of the WASH core complex also described as WASH regulatory complex (SHRC) composed of WASHC1, WASHC2, WASHC3, WASHC4 and WASHC5; in the complex interacts (via N-terminus) directly with WASHC1. The WASH core complex associates with the F-actin-capping protein dimer (formed by CAPZA1, CAPZA2 or CAPZA3 and CAPZB) in a transient or substoichiometric manner which was initially described as WASH complex. Interacts with VPS35; mediates the association with the retromer CSC complex. Interacts with FKBP15. Interacts with CCDC93, CCDC22, VPS35L; indicative for an association of the WASH core complex with the CCC and retriever complexes. Directly interacts with TBC1D23.

The protein localises to the early endosome membrane. It is found in the cell membrane. Acts as a component of the WASH core complex that functions as a nucleation-promoting factor (NPF) at the surface of endosomes, where it recruits and activates the Arp2/3 complex to induce actin polymerization, playing a key role in the fission of tubules that serve as transport intermediates during endosome sorting. Mediates the recruitment of the WASH core complex to endosome membranes via binding to phospholipids and VPS35 of the retromer CSC. Mediates the recruitment of the F-actin-capping protein dimer to the WASH core complex probably promoting localized F-actin polymerization needed for vesicle scission. Via its C-terminus binds various phospholipids, most strongly phosphatidylinositol 4-phosphate (PtdIns-(4)P), phosphatidylinositol 5-phosphate (PtdIns-(5)P) and phosphatidylinositol 3,5-bisphosphate (PtdIns-(3,5)P2). Involved in the endosome-to-plasma membrane trafficking and recycling of SNX27-retromer-dependent cargo proteins, such as GLUT1. Required for the association of DNAJC13, ENTR1, ANKRD50 with retromer CSC subunit VPS35. Required for the endosomal recruitment of CCC and retriever complexes subunits COMMD1 and CCDC93 as well as the retrievere complex subunit VPS35L. The protein is WASH complex subunit 2 of Rattus norvegicus (Rat).